We begin with the raw amino-acid sequence, 424 residues long: Serine--tRNA ligase (424 aa).

229 to 231 (TAE) is a binding site for L-serine. ATP contacts are provided by residues 260–262 (RTE) and V276. L-serine is bound at residue E283. An ATP-binding site is contributed by 347–350 (EVTS). T382 is a binding site for L-serine.

Belongs to the class-II aminoacyl-tRNA synthetase family. Type-1 seryl-tRNA synthetase subfamily. As to quaternary structure, homodimer. The tRNA molecule binds across the dimer.

Its subcellular location is the cytoplasm. The catalysed reaction is tRNA(Ser) + L-serine + ATP = L-seryl-tRNA(Ser) + AMP + diphosphate + H(+). The enzyme catalyses tRNA(Sec) + L-serine + ATP = L-seryl-tRNA(Sec) + AMP + diphosphate + H(+). It functions in the pathway aminoacyl-tRNA biosynthesis; selenocysteinyl-tRNA(Sec) biosynthesis; L-seryl-tRNA(Sec) from L-serine and tRNA(Sec): step 1/1. Catalyzes the attachment of serine to tRNA(Ser). Is also able to aminoacylate tRNA(Sec) with serine, to form the misacylated tRNA L-seryl-tRNA(Sec), which will be further converted into selenocysteinyl-tRNA(Sec). This is Serine--tRNA ligase from Rubrobacter xylanophilus (strain DSM 9941 / JCM 11954 / NBRC 16129 / PRD-1).